We begin with the raw amino-acid sequence, 306 residues long: N-acetylmuramic acid 6-phosphate etherase (306 aa).

The SIS domain occupies 59 to 222 (ISEALRQGGR…STGAMVQLGK (164 aa)). Residue E87 is the Proton donor of the active site. E118 is an active-site residue.

Belongs to the GCKR-like family. MurNAc-6-P etherase subfamily. Homodimer.

The enzyme catalyses N-acetyl-D-muramate 6-phosphate + H2O = N-acetyl-D-glucosamine 6-phosphate + (R)-lactate. It functions in the pathway amino-sugar metabolism; N-acetylmuramate degradation. Specifically catalyzes the cleavage of the D-lactyl ether substituent of MurNAc 6-phosphate, producing GlcNAc 6-phosphate and D-lactate. The protein is N-acetylmuramic acid 6-phosphate etherase of Gloeothece citriformis (strain PCC 7424) (Cyanothece sp. (strain PCC 7424)).